A 114-amino-acid chain; its full sequence is Somatostatin-1A (114 aa).

Positions 1-24 (MLSTRIQCALALLSLALAVCSVSA) are cleaved as a signal peptide. Positions 25 to 88 (APTDAKLRQL…KDEVRLELER (64 aa)) are excised as a propeptide. C103 and C114 are oxidised to a cystine.

The protein belongs to the somatostatin family.

Its subcellular location is the secreted. In terms of biological role, somatostatin inhibits the release of somatotropin. The protein is Somatostatin-1A (sst1a) of Carassius auratus (Goldfish).